Reading from the N-terminus, the 290-residue chain is 4-diphosphocytidyl-2-C-methyl-D-erythritol kinase (290 aa).

Residue Lys10 is part of the active site. 95–105 (PVAAGLAGGSS) is an ATP binding site. Residue Asp137 is part of the active site.

It belongs to the GHMP kinase family. IspE subfamily.

It catalyses the reaction 4-CDP-2-C-methyl-D-erythritol + ATP = 4-CDP-2-C-methyl-D-erythritol 2-phosphate + ADP + H(+). It functions in the pathway isoprenoid biosynthesis; isopentenyl diphosphate biosynthesis via DXP pathway; isopentenyl diphosphate from 1-deoxy-D-xylulose 5-phosphate: step 3/6. Its function is as follows. Catalyzes the phosphorylation of the position 2 hydroxy group of 4-diphosphocytidyl-2C-methyl-D-erythritol. In Geobacillus kaustophilus (strain HTA426), this protein is 4-diphosphocytidyl-2-C-methyl-D-erythritol kinase.